The following is a 465-amino-acid chain: D-arabinitol 4-dehydrogenase (465 aa).

This sequence belongs to the mannitol dehydrogenase family.

The catalysed reaction is D-arabinitol + NAD(+) = D-xylulose + NADH + H(+). It functions in the pathway carbohydrate metabolism; D-arabinitol metabolism. This is D-arabinitol 4-dehydrogenase (dalD) from Ralstonia nicotianae (strain ATCC BAA-1114 / GMI1000) (Ralstonia solanacearum).